The sequence spans 120 residues: Large ribosomal subunit protein uL22 (120 aa).

It belongs to the universal ribosomal protein uL22 family. Part of the 50S ribosomal subunit.

In terms of biological role, this protein binds specifically to 23S rRNA; its binding is stimulated by other ribosomal proteins, e.g. L4, L17, and L20. It is important during the early stages of 50S assembly. It makes multiple contacts with different domains of the 23S rRNA in the assembled 50S subunit and ribosome. Functionally, the globular domain of the protein is located near the polypeptide exit tunnel on the outside of the subunit, while an extended beta-hairpin is found that lines the wall of the exit tunnel in the center of the 70S ribosome. In Oenococcus oeni (strain ATCC BAA-331 / PSU-1), this protein is Large ribosomal subunit protein uL22.